We begin with the raw amino-acid sequence, 475 residues long: Cytosolic enolase 3 (475 aa).

N-acetylserine is present on serine 2. Substrate is bound by residues histidine 200 and glutamate 209. The Proton donor role is filled by aspartate 252. Mg(2+)-binding residues include aspartate 287, glutamate 336, and aspartate 361. 2 residues coordinate substrate: glutamate 336 and aspartate 361. Lysine 386 functions as the Proton acceptor in the catalytic mechanism. Substrate is bound by residues 413–416 (SHRC) and lysine 437.

It belongs to the enolase family. Homodimer. Requires Mg(2+) as cofactor.

It localises to the cytoplasm. Its subcellular location is the nucleus. It catalyses the reaction (2R)-2-phosphoglycerate = phosphoenolpyruvate + H2O. The protein operates within carbohydrate degradation; glycolysis; pyruvate from D-glyceraldehyde 3-phosphate: step 4/5. This chain is Cytosolic enolase 3 (ENO3), found in Arabidopsis thaliana (Mouse-ear cress).